The sequence spans 325 residues: Phospho-N-acetylmuramoyl-pentapeptide-transferase (325 aa).

9 helical membrane passes run leucine 7–phenylalanine 27, isoleucine 57–phenylalanine 77, leucine 81–leucine 101, valine 122–isoleucine 142, threonine 146–alanine 166, isoleucine 186–phenylalanine 206, valine 227–leucine 247, leucine 252–valine 272, and valine 302–valine 322.

It belongs to the glycosyltransferase 4 family. MraY subfamily. The cofactor is Mg(2+).

It is found in the cell membrane. The enzyme catalyses UDP-N-acetyl-alpha-D-muramoyl-L-alanyl-gamma-D-glutamyl-meso-2,6-diaminopimeloyl-D-alanyl-D-alanine + di-trans,octa-cis-undecaprenyl phosphate = di-trans,octa-cis-undecaprenyl diphospho-N-acetyl-alpha-D-muramoyl-L-alanyl-D-glutamyl-meso-2,6-diaminopimeloyl-D-alanyl-D-alanine + UMP. It participates in cell wall biogenesis; peptidoglycan biosynthesis. In terms of biological role, catalyzes the initial step of the lipid cycle reactions in the biosynthesis of the cell wall peptidoglycan: transfers peptidoglycan precursor phospho-MurNAc-pentapeptide from UDP-MurNAc-pentapeptide onto the lipid carrier undecaprenyl phosphate, yielding undecaprenyl-pyrophosphoryl-MurNAc-pentapeptide, known as lipid I. The protein is Phospho-N-acetylmuramoyl-pentapeptide-transferase of Shouchella clausii (strain KSM-K16) (Alkalihalobacillus clausii).